The following is a 245-amino-acid chain: Small ribosomal subunit protein uS3 (245 aa).

Residues 39 to 111 enclose the KH type-2 domain; sequence IRNFINKNYS…EVFFNVIEIK (73 aa).

It belongs to the universal ribosomal protein uS3 family. Part of the 30S ribosomal subunit. Forms a tight complex with proteins S10 and S14.

Binds the lower part of the 30S subunit head. Binds mRNA in the 70S ribosome, positioning it for translation. This chain is Small ribosomal subunit protein uS3, found in Phytoplasma mali (strain AT).